Here is a 529-residue protein sequence, read N- to C-terminus: BTB/POZ domain-containing protein 6 (529 aa).

The BTB domain maps to Ala-127–Ala-197.

Homodimer and heterodimer. Interacts with cul3 via the BTB domain.

The protein localises to the cytoplasm. Functionally, adapter protein for the cul3 E3 ubiquitin-protein ligase complex. Involved in late neuronal development and muscle formation. In Xenopus laevis (African clawed frog), this protein is BTB/POZ domain-containing protein 6 (btbd6).